The sequence spans 367 residues: MSLRRIMVTAVRNLHPVTLLPSPRINILYGSNGSGKTSVLEAVHLLGLARSFRSTRLNPVIQYEQAACTVFGEVQLTEGGTSNLGVSRERQGEFTIRIDGQNARSAAQLAELLPLQLINPDSFRLLEGAPKIRRQFLDWGVFHVEPRFLPAWQRLQKALRQRNSWLRHGTLDPASQAAWDRELCLASAEIDEYRRNYIKALKPVFERTLSELVELDGLTLSYYRGWDKDRELQEVLASSLLRDQQMGHTQAGPQRADLRLRLAGNNAADILSRGQQKLVVCALRIAQGHLVSQARRGHCIYLVDDLPSELDDQHRRALCRLLEELRCQVFITCVDHELLREGWQTETPVALFHVEQGRITQTHDHRE.

30–37 (GSNGSGKT) contributes to the ATP binding site.

This sequence belongs to the RecF family.

It is found in the cytoplasm. The RecF protein is involved in DNA metabolism; it is required for DNA replication and normal SOS inducibility. RecF binds preferentially to single-stranded, linear DNA. It also seems to bind ATP. The sequence is that of DNA replication and repair protein RecF from Pseudomonas putida (strain ATCC 700007 / DSM 6899 / JCM 31910 / BCRC 17059 / LMG 24140 / F1).